A 116-amino-acid chain; its full sequence is Ribonuclease P protein component (116 aa).

It belongs to the RnpA family. In terms of assembly, consists of a catalytic RNA component (M1 or rnpB) and a protein subunit.

It catalyses the reaction Endonucleolytic cleavage of RNA, removing 5'-extranucleotides from tRNA precursor.. In terms of biological role, RNaseP catalyzes the removal of the 5'-leader sequence from pre-tRNA to produce the mature 5'-terminus. It can also cleave other RNA substrates such as 4.5S RNA. The protein component plays an auxiliary but essential role in vivo by binding to the 5'-leader sequence and broadening the substrate specificity of the ribozyme. The chain is Ribonuclease P protein component from Exiguobacterium sibiricum (strain DSM 17290 / CCUG 55495 / CIP 109462 / JCM 13490 / 255-15).